A 271-amino-acid polypeptide reads, in one-letter code: Putative phosphoenolpyruvate synthase regulatory protein (271 aa).

An ADP-binding site is contributed by 152–159 (GVSRSGKT).

It belongs to the pyruvate, phosphate/water dikinase regulatory protein family. PSRP subfamily.

It carries out the reaction [pyruvate, water dikinase] + ADP = [pyruvate, water dikinase]-phosphate + AMP + H(+). The enzyme catalyses [pyruvate, water dikinase]-phosphate + phosphate + H(+) = [pyruvate, water dikinase] + diphosphate. Its function is as follows. Bifunctional serine/threonine kinase and phosphorylase involved in the regulation of the phosphoenolpyruvate synthase (PEPS) by catalyzing its phosphorylation/dephosphorylation. The polypeptide is Putative phosphoenolpyruvate synthase regulatory protein (Thiocapsa roseopersicina).